The chain runs to 329 residues: Malate dehydrogenase 2 (329 aa).

Residue 12-18 (GAAGQIA) coordinates NAD(+). 2 residues coordinate substrate: R93 and R99. NAD(+)-binding positions include N106, Q113, and 130–132 (VGN). Substrate-binding residues include N132 and R163. H188 functions as the Proton acceptor in the catalytic mechanism.

It belongs to the LDH/MDH superfamily. MDH type 2 family.

The enzyme catalyses (S)-malate + NAD(+) = oxaloacetate + NADH + H(+). In terms of biological role, catalyzes the reversible oxidation of malate to oxaloacetate. The sequence is that of Malate dehydrogenase 2 from Burkholderia thailandensis (strain ATCC 700388 / DSM 13276 / CCUG 48851 / CIP 106301 / E264).